We begin with the raw amino-acid sequence, 571 residues long: Chondroitin sulfate proteoglycan 5 (571 aa).

Residues 1–30 form the signal peptide; sequence MGRAGGGGPGWGPPPVLLLLGVTLVLTAGA. The Extracellular portion of the chain corresponds to 31–428; the sequence is VPAREAGSAI…SIITDFQVMC (398 aa). Ser38 is a glycosylation site (O-linked (Xyl...) (chondroitin sulfate) serine). Residue Asn57 is glycosylated (N-linked (GlcNAc...) asparagine). Residues 57 to 91 are disordered; sequence NDTREEAGLPAAGEDETSWTERGSELAAVGPGVGP. Thr76 carries an O-linked (GalNAc...) threonine glycan. Ser123 carries an O-linked (Xyl...) (chondroitin sulfate) serine glycan. Thr132 carries O-linked (GalNAc...) threonine glycosylation. 3 disordered regions span residues 137-169, 186-254, and 279-357; these read DEALGSSTMPPAIPEATEASGPPSPTLRDKPSL, GGST…TPSW, and DDLE…DLAT. Residue Ser143 is glycosylated (O-linked (GalNAc...) serine). 2 O-linked (GalNAc...) threonine glycosylation sites follow: Thr144 and Thr153. O-linked (GalNAc...) serine glycosylation is found at Ser156 and Ser160. Residues Thr162 and Thr198 are each glycosylated (O-linked (GalNAc...) threonine). Over residues 214-223 the composition is skewed to acidic residues; sequence IDIDYFEGLD. An O-linked (GalNAc...) threonine glycan is attached at Thr240. The interaction with TNC and TNR stretch occupies residues 270–306; that stretch reads DFYPTTSFYDDLEEEEEEEEDKDAVGGGDLEDESDLL. The span at 279-291 shows a compositional bias: acidic residues; sequence DDLEEEEEEEEDK. O-linked (GalNAc...) threonine glycosylation is found at Thr318 and Thr322. Asn372 carries N-linked (GlcNAc...) asparagine glycosylation. An EGF-like domain is found at 376 to 418; that stretch reads RSVCDLFPSYCHNGGQCYLVENIGAFCRCNTQDYIWHKGMRCE. 3 disulfide bridges follow: Cys379/Cys392, Cys386/Cys402, and Cys404/Cys417. A helical membrane pass occupies residues 429 to 449; it reads VAVGSAALVLLLLFMMTVFFA. The interval 447-465 is interaction with GOPC; the sequence is FFAKKLYLLKTENTKLRRT. Residues 450–571 lie on the Cytoplasmic side of the membrane; the sequence is KKLYLLKTEN…EVNCLQNNLT (122 aa). 4 positions are modified to phosphoserine: Ser472, Ser480, Ser488, and Ser548. The interval 538–563 is disordered; that stretch reads EESFNIQNSMSPKLEGGKGDQDDLEV.

In terms of assembly, interacts with ERBB3 and GOPC. Binds TNR and probably TNC. Interacts with MDK; this interaction is independent of the presence of chondroitin sulfate chains and promotes elongation of oligodendroglial precursor-like cells. Post-translationally, N-glycosylated. O-glycosylated; contains chondroitin sulfate glycans. Part-time proteoglycan, expressed in part as a proteoglycan exhibiting chondroitin sulfate glycans and in part as a non-proteoglycan form. The relative amount of both forms depends on tissues and tissue maturation. In terms of processing, phosphorylated; in intracellular and extracellular parts. Expressed in cerebral cortex and cerebellum. Expressed in retina (at protein level).

Its subcellular location is the cell membrane. It localises to the synaptic cell membrane. It is found in the endoplasmic reticulum membrane. The protein localises to the golgi apparatus membrane. The protein resides in the cell surface. Its subcellular location is the secreted. In terms of biological role, may function as a growth and differentiation factor involved in neuritogenesis. May induce ERBB3 activation. The sequence is that of Chondroitin sulfate proteoglycan 5 (Cspg5) from Rattus norvegicus (Rat).